We begin with the raw amino-acid sequence, 210 residues long: Urease accessory protein UreG (210 aa).

14–21 contributes to the GTP binding site; the sequence is GPVGSGKT.

This sequence belongs to the SIMIBI class G3E GTPase family. UreG subfamily. As to quaternary structure, homodimer. UreD, UreF and UreG form a complex that acts as a GTP-hydrolysis-dependent molecular chaperone, activating the urease apoprotein by helping to assemble the nickel containing metallocenter of UreC. The UreE protein probably delivers the nickel.

The protein localises to the cytoplasm. Its function is as follows. Facilitates the functional incorporation of the urease nickel metallocenter. This process requires GTP hydrolysis, probably effectuated by UreG. This chain is Urease accessory protein UreG, found in Rhodopseudomonas palustris (strain BisA53).